Consider the following 1350-residue polypeptide: ABC transporter C family member 13 (1350 aa).

The 284-residue stretch at 107-390 folds into the ABC transmembrane type-1 1 domain; that stretch reads NKKSIFIVIL…LPEAIHNLLG (284 aa). A run of 4 helical transmembrane segments spans residues 111–131, 143–163, 215–235, and 240–260; these read IFIV…LKYF, TFLT…SYTL, IGLF…FPIQ, and LALL…VMII. Residues 462–481 form a disordered region; sequence EKSEEEYETTTTTTDDNNNN. Positions 470 to 481 are enriched in low complexity; sequence TTTTTTDDNNNN. The ABC transporter 1 domain maps to 473-693; sequence TTTDDNNNNN…IDFESIMKTK (221 aa). Position 505-512 (505-512) interacts with ATP; it reads GVVGSGKT. The ABC transmembrane type-1 2 domain maps to 774–1061; sequence KHGSSTFFFI…FVELEVKMNS (288 aa). Helical transmembrane passes span 776 to 796, 816 to 836, 887 to 907, 909 to 929, 1003 to 1023, and 1029 to 1049; these read GSST…QAIF, DSFY…TLVI, IDLL…TVVF, ICVM…LIIV, IGVR…FFSL, and GFSV…NWAV. The ABC transporter 2 domain maps to 1103–1337; sequence IEFRDVEIRY…KNSKFSKLVK (235 aa). ATP is bound at residue 1137–1144; it reads GRTGAGKS.

The protein belongs to the ABC transporter superfamily. ABCC family. Conjugate transporter (TC 3.A.1.208) subfamily.

The protein resides in the membrane. This is ABC transporter C family member 13 (abcC13) from Dictyostelium discoideum (Social amoeba).